A 437-amino-acid polypeptide reads, in one-letter code: Trigger factor (437 aa).

The 86-residue stretch at 161–246 (DDQVNIDFVG…VNSVSAPVLP (86 aa)) folds into the PPIase FKBP-type domain.

The protein belongs to the FKBP-type PPIase family. Tig subfamily.

The protein resides in the cytoplasm. It catalyses the reaction [protein]-peptidylproline (omega=180) = [protein]-peptidylproline (omega=0). Functionally, involved in protein export. Acts as a chaperone by maintaining the newly synthesized protein in an open conformation. Functions as a peptidyl-prolyl cis-trans isomerase. The polypeptide is Trigger factor (Pseudomonas putida (strain GB-1)).